Reading from the N-terminus, the 155-residue chain is MRIKLIAVGSRMPRWVEEGWQEYVKRLPAELPLELVEIPLNTRGKNADVARLIRQEGEAMLSKVQPGERIVTLEVHGKPWSTEQLAAELERWRLDARNVNLMVGGPEGLAPEVCARSEQRWSLSPLTLPHPLVRILLGEQIYRAWTVLSGHPYHK.

S-adenosyl-L-methionine-binding positions include Leu-73, Gly-104, and 123 to 128; that span reads LSPLTL.

This sequence belongs to the RNA methyltransferase RlmH family. As to quaternary structure, homodimer.

It localises to the cytoplasm. It catalyses the reaction pseudouridine(1915) in 23S rRNA + S-adenosyl-L-methionine = N(3)-methylpseudouridine(1915) in 23S rRNA + S-adenosyl-L-homocysteine + H(+). Functionally, specifically methylates the pseudouridine at position 1915 (m3Psi1915) in 23S rRNA. The polypeptide is Ribosomal RNA large subunit methyltransferase H (Ectopseudomonas mendocina (strain ymp) (Pseudomonas mendocina)).